Consider the following 110-residue polypeptide: uncharacterized protein (110 aa).

The protein to M.jannaschii MJ1213 and A.aeolicus AA15.

This is an uncharacterized protein from Methanocaldococcus jannaschii (strain ATCC 43067 / DSM 2661 / JAL-1 / JCM 10045 / NBRC 100440) (Methanococcus jannaschii).